Consider the following 312-residue polypeptide: Tetraspanin-17 (312 aa).

4 helical membrane-spanning segments follow: residues 17–37 (IFSI…LWML), 64–84 (VSLV…CGAV), 89–109 (FLLL…VAMG), and 274–294 (IWIF…GICL).

Belongs to the tetraspanin (TM4SF) family. Expressed in dopaminergic neurons, head muscles, vulva and spermatheca.

Its subcellular location is the cell membrane. The protein localises to the cell projection. The protein resides in the dendrite. It is found in the axon. Protects dopaminergic neurons against oxidative stress-induced neurodegeneration. May act partly via dopamine receptor dop-2 to negatively regulate dopamine reuptake transporter dat-1 activity. Also plays a role in modulating behaviors linked to dopamine signaling. Confers protection against oxidative stress in the whole body. The sequence is that of Tetraspanin-17 from Caenorhabditis elegans.